The chain runs to 318 residues: Protease HtpX homolog (318 aa).

A run of 2 helical transmembrane segments spans residues Thr-6–Gly-26 and Gly-28–Ser-48. Zn(2+) is bound at residue His-130. Residue Glu-131 is part of the active site. Zn(2+) is bound at residue His-134. 2 helical membrane-spanning segments follow: residues Ile-145–Gly-165 and Pro-173–Val-193. Glu-202 lines the Zn(2+) pocket. Positions Asn-284 to Ser-318 are disordered.

It belongs to the peptidase M48B family. Requires Zn(2+) as cofactor.

The protein resides in the cell inner membrane. This Rhizobium etli (strain ATCC 51251 / DSM 11541 / JCM 21823 / NBRC 15573 / CFN 42) protein is Protease HtpX homolog.